The following is a 197-amino-acid chain: Phosphoheptose isomerase (197 aa).

An SIS domain is found at 37–197 (MLQCLMNDGK…CIDSVLLEGM (161 aa)). Position 52–54 (52–54 (NGG)) interacts with substrate. His61 and Glu65 together coordinate Zn(2+). Residues Glu65, 94–95 (ND), 120–122 (STS), Ser125, and Gln175 each bind substrate. Residues Gln175 and His183 each coordinate Zn(2+).

This sequence belongs to the SIS family. GmhA subfamily. In terms of assembly, homotetramer. It depends on Zn(2+) as a cofactor.

Its subcellular location is the cytoplasm. It catalyses the reaction 2 D-sedoheptulose 7-phosphate = D-glycero-alpha-D-manno-heptose 7-phosphate + D-glycero-beta-D-manno-heptose 7-phosphate. Its pathway is carbohydrate biosynthesis; D-glycero-D-manno-heptose 7-phosphate biosynthesis; D-glycero-alpha-D-manno-heptose 7-phosphate and D-glycero-beta-D-manno-heptose 7-phosphate from sedoheptulose 7-phosphate: step 1/1. Its function is as follows. Catalyzes the isomerization of sedoheptulose 7-phosphate in D-glycero-D-manno-heptose 7-phosphate. The sequence is that of Phosphoheptose isomerase from Neisseria meningitidis serogroup C / serotype 2a (strain ATCC 700532 / DSM 15464 / FAM18).